Here is a 294-residue protein sequence, read N- to C-terminus: Probable enoyl-CoA hydratase echA12 (294 aa).

The protein belongs to the enoyl-CoA hydratase/isomerase family.

It carries out the reaction a (3S)-3-hydroxyacyl-CoA = a (2E)-enoyl-CoA + H2O. The catalysed reaction is a 4-saturated-(3S)-3-hydroxyacyl-CoA = a (3E)-enoyl-CoA + H2O. Could possibly oxidize fatty acids using specific components. This is Probable enoyl-CoA hydratase echA12 (echA12) from Mycobacterium leprae (strain TN).